The primary structure comprises 359 residues: Mandelate racemase (359 aa).

Lysine 166 acts as the Proton acceptor; specific for S-mandelate in catalysis. The Mg(2+) site is built by aspartate 195, glutamate 221, and glutamate 247. The active-site Proton acceptor; specific for R-mandelate is histidine 297. Glutamate 317 contacts substrate.

The protein belongs to the mandelate racemase/muconate lactonizing enzyme family. In terms of assembly, homooctamer. It depends on Mg(2+) as a cofactor.

It carries out the reaction (S)-mandelate = (R)-mandelate. The protein operates within aromatic compound metabolism; (R)-mandelate degradation; benzoate from (R)-mandelate: step 1/4. In Pseudomonas putida (Arthrobacter siderocapsulatus), this protein is Mandelate racemase (mdlA).